Reading from the N-terminus, the 474-residue chain is 15-cis-phytoene desaturase (474 aa).

This sequence belongs to the carotenoid/retinoid oxidoreductase family.

It is found in the cell membrane. The catalysed reaction is 2 a plastoquinone + 15-cis-phytoene = 9,9',15-tri-cis-zeta-carotene + 2 a plastoquinol. It functions in the pathway carotenoid biosynthesis; lycopene biosynthesis. With respect to regulation, inhibited by the herbicide norflurazon in a non-competitive way. Its function is as follows. This enzyme converts phytoene into zeta-carotene via the intermediary of phytofluene by the symmetrical introduction of two double bonds at the C-11 and C-11' positions of phytoene. Also active with phytofluene and 1,2-epoxyphytoene as substrates. In Synechococcus elongatus (strain ATCC 33912 / PCC 7942 / FACHB-805) (Anacystis nidulans R2), this protein is 15-cis-phytoene desaturase (pds).